The chain runs to 191 residues: MSLIRPALVLFILLTLLTGGVYPLLTTSLGQWWFNSQANGSLIRLNGEVRGSALIGQNFTAAGYFQGRPSATAETTDNPMASGGSNLAASNPALDKAVSERVQALRAANPDADPRVPVELVTTSASGLDNNLTPAAALWQVPRVAQARQLSVEQVTQLVNQATQTPLLSFLGQPVVNILQLNMALDALKDK.

The chain crosses the membrane as a helical span at residues 6-26 (PALVLFILLTLLTGGVYPLLT).

It belongs to the KdpC family. As to quaternary structure, the system is composed of three essential subunits: KdpA, KdpB and KdpC.

The protein resides in the cell inner membrane. In terms of biological role, part of the high-affinity ATP-driven potassium transport (or Kdp) system, which catalyzes the hydrolysis of ATP coupled with the electrogenic transport of potassium into the cytoplasm. This subunit acts as a catalytic chaperone that increases the ATP-binding affinity of the ATP-hydrolyzing subunit KdpB by the formation of a transient KdpB/KdpC/ATP ternary complex. This chain is Potassium-transporting ATPase KdpC subunit, found in Klebsiella pneumoniae subsp. pneumoniae (strain ATCC 700721 / MGH 78578).